The primary structure comprises 433 residues: Putative purine permease YbbY (433 aa).

Topologically, residues 1–17 (MFNFAVSRESLLSGFQW) are periplasmic. The chain crosses the membrane as a helical span at residues 18–38 (FFFIFCNTVVVPPTLLSAFQL). Over 39–42 (PQSS) the chain is Cytoplasmic. Residues 43-63 (LLTLTQYAFLATALACFAQAF) traverse the membrane as a helical segment. Residues 64–68 (CGHRR) lie on the Periplasmic side of the membrane. A helical membrane pass occupies residues 69–89 (AIMEGPGGLWWGTILTITLGE). The Cytoplasmic segment spans residues 90–102 (ASRGTPINDIATS). A helical transmembrane segment spans residues 103 to 123 (LAVGIALSGVLTMLIGFSGLG). The Periplasmic segment spans residues 124–130 (HRLARLF). A helical transmembrane segment spans residues 131–151 (TPSVMVLFMLMLGAQLTTIFF). The Cytoplasmic portion of the chain corresponds to 152-169 (KGMLGLPFGIADPNFKIQ). A helical membrane pass occupies residues 170 to 190 (LPPFALSVAVMCLVLAMIIFL). The Periplasmic portion of the chain corresponds to 191–196 (PQRFAR). Residues 197–217 (YGLLVGTITGWLLWYFCFPSS) traverse the membrane as a helical segment. The Cytoplasmic segment spans residues 218–230 (HSLSGELHWQWFP). The helical transmembrane segment at 231–251 (LGSGGALSPGIILTAVITGLV) threads the bilayer. Topologically, residues 252–288 (NISNTYGAIRGTDVFYPQQGAGNTRYRRSFVATGFMT) are periplasmic. The helical transmembrane segment at 289–309 (LITVPLAVIPFSPFVSSIGLL) threads the bilayer. Over 310–319 (TQTGDYTRRS) the chain is Cytoplasmic. Residues 320–340 (FIYGSVICLLVALVPALTRLF) traverse the membrane as a helical segment. Residues 341–345 (CSIPL) lie on the Periplasmic side of the membrane. The chain crosses the membrane as a helical span at residues 346–366 (PVSSAVMLVSYLPLLFSALVF). Topologically, residues 367 to 379 (SQQITFTARNIYR) are cytoplasmic. The chain crosses the membrane as a helical span at residues 380–400 (LALPLFVGIFLMALPPVYLQD). Over 401 to 407 (LPLTLRP) the chain is Periplasmic. A helical transmembrane segment spans residues 408-428 (LLSNGLLVGILLAVLMDNLIP). Topologically, residues 429 to 433 (WERIE) are cytoplasmic.

The protein belongs to the nucleobase:cation symporter-2 (NCS2) (TC 2.A.40) family.

The protein localises to the cell inner membrane. This chain is Putative purine permease YbbY (ybbY), found in Escherichia coli (strain K12).